The following is a 153-amino-acid chain: uncharacterized protein (153 aa).

The protein to M.jannaschii MJ1183.

This is an uncharacterized protein from Methanothermobacter thermautotrophicus (strain ATCC 29096 / DSM 1053 / JCM 10044 / NBRC 100330 / Delta H) (Methanobacterium thermoautotrophicum).